The chain runs to 178 residues: Dual-action ribosomal maturation protein DarP (178 aa).

It belongs to the DarP family.

The protein localises to the cytoplasm. In terms of biological role, member of a network of 50S ribosomal subunit biogenesis factors which assembles along the 30S-50S interface, preventing incorrect 23S rRNA structures from forming. Promotes peptidyl transferase center (PTC) maturation. The sequence is that of Dual-action ribosomal maturation protein DarP from Haemophilus influenzae (strain PittEE).